Consider the following 505-residue polypeptide: Deoxyguanosinetriphosphate triphosphohydrolase (505 aa).

An HD domain is found at 66-273; it reads RLTHSMEVQQ…MEAADDISYC (208 aa).

Belongs to the dGTPase family. Type 1 subfamily. Homotetramer. It depends on Mg(2+) as a cofactor.

It catalyses the reaction dGTP + H2O = 2'-deoxyguanosine + triphosphate + H(+). Its function is as follows. dGTPase preferentially hydrolyzes dGTP over the other canonical NTPs. This chain is Deoxyguanosinetriphosphate triphosphohydrolase, found in Serratia proteamaculans (strain 568).